We begin with the raw amino-acid sequence, 384 residues long: MTKPIITFNNVSKTFEDSGTQVLKNINFDLEEGKFYTLLGASGSGKSTILNIMAGLLDASSGDIYLDGERINDLPINKRDIHTVFQNYALFPHMTVFENVAFALKLKKVDKKEIAKRVKETLKMVQLEGFENRSIQKLSGGQRQRVAIARAIINQPRVVLLDEPLSALDLKLRTEMQYELRELQQRLGITFVFVTHDQEEALAMSDWIFVMNEGEIVQSGTPVDIYDEPINHFVANFIGESNIINGTMIEDYLVSFNGKEFESVDGGMRPNEPVEVVIRPEDLQITLPEEGKLQVKVDTQLFRGVHYEIIAYDELGNEWMIHSTRKAIEGEVIGLDFTPEDLHIMRLNETEEEFDARIEEYVEMDEPEDGLINAIEEERNEENL.

Residues 6-238 enclose the ABC transporter domain; the sequence is ITFNNVSKTF…PINHFVANFI (233 aa). An ATP-binding site is contributed by 40–47; sequence GASGSGKS.

This sequence belongs to the ABC transporter superfamily. Spermidine/putrescine importer (TC 3.A.1.11.1) family. As to quaternary structure, the complex is composed of two ATP-binding proteins (PotA), two transmembrane proteins (PotB and PotC) and a solute-binding protein (PotD).

Its subcellular location is the cell membrane. The enzyme catalyses ATP + H2O + polyamine-[polyamine-binding protein]Side 1 = ADP + phosphate + polyamineSide 2 + [polyamine-binding protein]Side 1.. Its function is as follows. Part of the ABC transporter complex PotABCD involved in spermidine/putrescine import. Responsible for energy coupling to the transport system. The chain is Spermidine/putrescine import ATP-binding protein PotA from Streptococcus pyogenes serotype M18 (strain MGAS8232).